Here is a 225-residue protein sequence, read N- to C-terminus: MVSHSELRNLFCSADAVCFDVDSTVIQEEGIDELAKFCGVEDAVSEMTRQAMGGAVPFKAALTQRLALIQPSREQVQRLLAEHPPHLTPGIRELVSRLQERNVQVFLISGGFRSIVEHVASKLNIPSTNVFANRLKFYFNGEYAGFDETQPTAESGGKGKVIKLLKEKFHFKKIVMVGDGATDMEACPPADAFIGFGGNVIRQQVKDNAEWYITDFVELLGALEE.

M1 carries the post-translational modification N-acetylmethionine. D20 functions as the Nucleophile in the catalytic mechanism. The Mg(2+) site is built by D20 and D22. 20–22 (DVD) is an L-serine binding site. The Proton donor role is filled by D22. M52 contacts O-phospho-L-serine. G53 provides a ligand contact to phosphate. L-serine-binding positions include 109 to 111 (SGG) and K158. O-phospho-L-serine contacts are provided by residues 109–111 (SGG) and K158. A Mg(2+)-binding site is contributed by D179. T182 contacts O-phospho-L-serine. A phosphate-binding site is contributed by T182.

Belongs to the HAD-like hydrolase superfamily. SerB family. Homodimer. It depends on Mg(2+) as a cofactor.

The protein localises to the cytoplasm. It is found in the cytosol. It carries out the reaction O-phospho-L-serine + H2O = L-serine + phosphate. The enzyme catalyses O-phospho-D-serine + H2O = D-serine + phosphate. It functions in the pathway amino-acid biosynthesis; L-serine biosynthesis; L-serine from 3-phospho-D-glycerate: step 3/3. Functionally, catalyzes the last irreversible step in the biosynthesis of L-serine from carbohydrates, the dephosphorylation of O-phospho-L-serine to L-serine. L-serine can then be used in protein synthesis, to produce other amino acids, in nucleotide metabolism or in glutathione synthesis, or can be racemized to D-serine, a neuromodulator. May also act on O-phospho-D-serine. The sequence is that of Phosphoserine phosphatase from Bos taurus (Bovine).